The following is a 720-amino-acid chain: Phosphoribosylformylglycinamidine synthase subunit PurL (720 aa).

The active site involves histidine 47. ATP is bound by residues tyrosine 50 and lysine 89. Mg(2+) is bound at residue glutamate 91. Substrate contacts are provided by residues 92–95 and arginine 114; that span reads SHNH. The Proton acceptor role is filled by histidine 93. Aspartate 115 serves as a coordination point for Mg(2+). Residue glutamine 238 coordinates substrate. Aspartate 266 provides a ligand contact to Mg(2+). 310–312 is a binding site for substrate; that stretch reads ESQ. ATP contacts are provided by aspartate 488 and glycine 525. Asparagine 526 is a binding site for Mg(2+). Serine 528 contacts substrate.

It belongs to the FGAMS family. Monomer. Part of the FGAM synthase complex composed of 1 PurL, 1 PurQ and 2 PurS subunits.

Its subcellular location is the cytoplasm. The catalysed reaction is N(2)-formyl-N(1)-(5-phospho-beta-D-ribosyl)glycinamide + L-glutamine + ATP + H2O = 2-formamido-N(1)-(5-O-phospho-beta-D-ribosyl)acetamidine + L-glutamate + ADP + phosphate + H(+). Its pathway is purine metabolism; IMP biosynthesis via de novo pathway; 5-amino-1-(5-phospho-D-ribosyl)imidazole from N(2)-formyl-N(1)-(5-phospho-D-ribosyl)glycinamide: step 1/2. Part of the phosphoribosylformylglycinamidine synthase complex involved in the purines biosynthetic pathway. Catalyzes the ATP-dependent conversion of formylglycinamide ribonucleotide (FGAR) and glutamine to yield formylglycinamidine ribonucleotide (FGAM) and glutamate. The FGAM synthase complex is composed of three subunits. PurQ produces an ammonia molecule by converting glutamine to glutamate. PurL transfers the ammonia molecule to FGAR to form FGAM in an ATP-dependent manner. PurS interacts with PurQ and PurL and is thought to assist in the transfer of the ammonia molecule from PurQ to PurL. This Cereibacter sphaeroides (strain ATCC 17023 / DSM 158 / JCM 6121 / CCUG 31486 / LMG 2827 / NBRC 12203 / NCIMB 8253 / ATH 2.4.1.) (Rhodobacter sphaeroides) protein is Phosphoribosylformylglycinamidine synthase subunit PurL.